Reading from the N-terminus, the 206-residue chain is Sperm acrosome developmental regulator (206 aa).

A disordered region spans residues 180-206 (RRHHVRCHAAPRPNPAQSLKLDAQSPL).

In terms of tissue distribution, expressed in sperm (at protein level).

It is found in the cytoplasmic vesicle. The protein resides in the secretory vesicle. Its subcellular location is the acrosome. Functionally, may play a role in acrosome formation and nucleus shaping during spermiogenesis. This chain is Sperm acrosome developmental regulator, found in Homo sapiens (Human).